Here is a 557-residue protein sequence, read N- to C-terminus: NADH-quinone oxidoreductase subunit C/D (557 aa).

The segment covering 1–13 has biased composition (acidic residues); it reads MSLEEQQSDDPAE. A disordered region spans residues 1 to 20; sequence MSLEEQQSDDPAELESGVSR. The NADH dehydrogenase I subunit C stretch occupies residues 1–174; sequence MSLEEQQSDD…ATLREHANPL (174 aa). Residues 184–557 form an NADH dehydrogenase I subunit D region; that stretch reads NTMYINIGPH…LDIVLGEVDR (374 aa). A Glycyl lysine isopeptide (Lys-Gly) (interchain with G-Cter in SAMP2) cross-link involves residue lysine 517.

It in the N-terminal section; belongs to the complex I 30 kDa subunit family. In the C-terminal section; belongs to the complex I 49 kDa subunit family. As to quaternary structure, NDH-1 is composed of 13 different subunits. Subunits NuoB, CD, E, F, and G constitute the peripheral sector of the complex.

The protein localises to the cell membrane. It carries out the reaction a quinone + NADH + 5 H(+)(in) = a quinol + NAD(+) + 4 H(+)(out). NDH-1 shuttles electrons from NADH, via FMN and iron-sulfur (Fe-S) centers, to quinones in the respiratory chain. Couples the redox reaction to proton translocation (for every two electrons transferred, four hydrogen ions are translocated across the cytoplasmic membrane), and thus conserves the redox energy in a proton gradient. This is NADH-quinone oxidoreductase subunit C/D (nuoCD) from Haloferax volcanii (strain ATCC 29605 / DSM 3757 / JCM 8879 / NBRC 14742 / NCIMB 2012 / VKM B-1768 / DS2) (Halobacterium volcanii).